The following is a 562-amino-acid chain: Putative transport protein YPA_0617 (562 aa).

6 helical membrane-spanning segments follow: residues 8–28 (LLNG…LCLG), 37–57 (LGNA…HFAI), 66–86 (FMLF…SIFF), 94–114 (MLAL…GKLF), 118–138 (IGLT…LVGA), and 158–178 (NLSL…ILGA). RCK C-terminal domains lie at 202-288 (LDTD…SFRN) and 290-373 (KEVF…KIGF). 5 helical membrane-spanning segments follow: residues 383-403 (LLAF…TFQF), 406-426 (FSFG…LGFL), 447-467 (FGLM…INSS), 475-495 (MLIS…VFGA), and 541-561 (IANV…PGIL).

This sequence belongs to the AAE transporter (TC 2.A.81) family. YbjL subfamily.

The protein localises to the cell membrane. The polypeptide is Putative transport protein YPA_0617 (Yersinia pestis bv. Antiqua (strain Antiqua)).